The sequence spans 165 residues: UPF0303 protein Bxeno_A1932 (165 aa).

This sequence belongs to the UPF0303 family.

In Paraburkholderia xenovorans (strain LB400), this protein is UPF0303 protein Bxeno_A1932.